The following is a 298-amino-acid chain: NFU1 iron-sulfur cluster scaffold homolog, mitochondrial (298 aa).

The interval 190–258 (IKELLDTRIR…IPEVESVEQV (69 aa)) is nifU. 2 residues coordinate [4Fe-4S] cluster: cysteine 227 and cysteine 230. Residues 279-288 (QKESVNQPNA) show a composition bias toward polar residues. The interval 279-298 (QKESVNQPNAPVNIGGGTPN) is disordered.

The protein belongs to the NifU family.

It is found in the mitochondrion. Functionally, molecular scaffold for [Fe-S] cluster assembly of mitochondrial iron-sulfur proteins. The sequence is that of NFU1 iron-sulfur cluster scaffold homolog, mitochondrial from Drosophila virilis (Fruit fly).